A 159-amino-acid chain; its full sequence is 2-C-methyl-D-erythritol 2,4-cyclodiphosphate synthase (159 aa).

The a divalent metal cation site is built by Asp-10 and His-12. Residues 10–12 (DVH) and 37–38 (HS) contribute to the 4-CDP-2-C-methyl-D-erythritol 2-phosphate site. An a divalent metal cation-binding site is contributed by His-45. 4-CDP-2-C-methyl-D-erythritol 2-phosphate is bound by residues 59–61 (DIG), 64–68 (FLDTD), 103–109 (AQAPKML), 135–138 (TTTE), Phe-142, and Arg-145.

Belongs to the IspF family. As to quaternary structure, homotrimer. It depends on a divalent metal cation as a cofactor.

The catalysed reaction is 4-CDP-2-C-methyl-D-erythritol 2-phosphate = 2-C-methyl-D-erythritol 2,4-cyclic diphosphate + CMP. The protein operates within isoprenoid biosynthesis; isopentenyl diphosphate biosynthesis via DXP pathway; isopentenyl diphosphate from 1-deoxy-D-xylulose 5-phosphate: step 4/6. In terms of biological role, involved in the biosynthesis of isopentenyl diphosphate (IPP) and dimethylallyl diphosphate (DMAPP), two major building blocks of isoprenoid compounds. Catalyzes the conversion of 4-diphosphocytidyl-2-C-methyl-D-erythritol 2-phosphate (CDP-ME2P) to 2-C-methyl-D-erythritol 2,4-cyclodiphosphate (ME-CPP) with a corresponding release of cytidine 5-monophosphate (CMP). The polypeptide is 2-C-methyl-D-erythritol 2,4-cyclodiphosphate synthase (Francisella tularensis subsp. holarctica (strain OSU18)).